Consider the following 144-residue polypeptide: Large ribosomal subunit protein uL11 (144 aa).

This sequence belongs to the universal ribosomal protein uL11 family. As to quaternary structure, part of the ribosomal stalk of the 50S ribosomal subunit. Interacts with L10 and the large rRNA to form the base of the stalk. L10 forms an elongated spine to which L12 dimers bind in a sequential fashion forming a multimeric L10(L12)X complex. One or more lysine residues are methylated.

Forms part of the ribosomal stalk which helps the ribosome interact with GTP-bound translation factors. The protein is Large ribosomal subunit protein uL11 of Nocardia farcinica (strain IFM 10152).